A 357-amino-acid chain; its full sequence is Histidine biosynthesis bifunctional protein HisB (357 aa).

Residues 1-168 (MTPILFIDRD…GIAHALADAP (168 aa)) are histidinol-phosphatase. The Nucleophile role is filled by Asp8. Asp8, Asp10, and Asp128 together coordinate Mg(2+). The active-site Proton donor is Asp10. An imidazoleglycerol-phosphate dehydratase region spans residues 169-357 (RTAVVQRDTK…TALPSTKGAL (189 aa)).

This sequence in the N-terminal section; belongs to the histidinol-phosphatase family. In the C-terminal section; belongs to the imidazoleglycerol-phosphate dehydratase family. The cofactor is Mg(2+).

The protein localises to the cytoplasm. It catalyses the reaction D-erythro-1-(imidazol-4-yl)glycerol 3-phosphate = 3-(imidazol-4-yl)-2-oxopropyl phosphate + H2O. The catalysed reaction is L-histidinol phosphate + H2O = L-histidinol + phosphate. The protein operates within amino-acid biosynthesis; L-histidine biosynthesis; L-histidine from 5-phospho-alpha-D-ribose 1-diphosphate: step 6/9. It participates in amino-acid biosynthesis; L-histidine biosynthesis; L-histidine from 5-phospho-alpha-D-ribose 1-diphosphate: step 8/9. In Stenotrophomonas maltophilia (strain K279a), this protein is Histidine biosynthesis bifunctional protein HisB.